Reading from the N-terminus, the 546-residue chain is ATP synthase subunit alpha (546 aa).

172-179 (GDRKTGKT) provides a ligand contact to ATP. 2 stretches are compositionally biased toward polar residues: residues 511-520 (FRTTEGNNLG) and 536-546 (TELNVSRKTAK). Positions 511–546 (FRTTEGNNLGTEAPVDPLAADDVNKTELNVSRKTAK) are disordered.

This sequence belongs to the ATPase alpha/beta chains family. As to quaternary structure, F-type ATPases have 2 components, CF(1) - the catalytic core - and CF(0) - the membrane proton channel. CF(1) has five subunits: alpha(3), beta(3), gamma(1), delta(1), epsilon(1). CF(0) has three main subunits: a(1), b(2) and c(9-12). The alpha and beta chains form an alternating ring which encloses part of the gamma chain. CF(1) is attached to CF(0) by a central stalk formed by the gamma and epsilon chains, while a peripheral stalk is formed by the delta and b chains.

The protein resides in the cell membrane. The catalysed reaction is ATP + H2O + 4 H(+)(in) = ADP + phosphate + 5 H(+)(out). In terms of biological role, produces ATP from ADP in the presence of a proton gradient across the membrane. The alpha chain is a regulatory subunit. The protein is ATP synthase subunit alpha of Corynebacterium aurimucosum (strain ATCC 700975 / DSM 44827 / CIP 107346 / CN-1) (Corynebacterium nigricans).